Consider the following 467-residue polypeptide: AT-rich interactive domain-containing protein cfi-1 (467 aa).

The tract at residues 1 to 56 (MSVRIDEPQLFVSMSKEPTQETVNVGGHHDDSSSNCDERVDDQTEEQKSPPASPDL) is disordered. Residues 27–48 (GHHDDSSSNCDERVDDQTEEQK) are compositionally biased toward basic and acidic residues. One can recognise an ARID domain in the interval 181–273 (DVKRKEWLDD…YLYDYECEKE (93 aa)). Positions 356-464 (AILEAHQRNL…GVLFALDETV (109 aa)) constitute an REKLES domain. Residues 383–441 (LTACSNGNGGNIHNSGRESTSSNDSDIPAKRPKLENDVKTNGASSMRISTKHSDNSKTS) are disordered. Basic and acidic residues predominate over residues 409-420 (IPAKRPKLENDV). Positions 421–430 (KTNGASSMRI) are enriched in polar residues.

In terms of tissue distribution, present in IL2 and URA neurons, and in AVD and PVC interneurons. Present in muscles from head and pharynx (at protein level).

It localises to the nucleus. Functionally, transcription factor. Regulates neuronal subtype identity. Involved in motor neuron fate determination and maintenance, acting as a transcriptional repressor to counteract gene activation by transcription factor unc-3 in a subset of motor neurons. Probably acts by binding to specific promoter elements. Promotes differentiation of URA sensory neurons and prevents them from expressing male-specific CEM neuronal features. Promotes differentiation of AVD and PVC interneurons and their glutamate receptor expression. This chain is AT-rich interactive domain-containing protein cfi-1 (cfi-1), found in Caenorhabditis elegans.